The chain runs to 160 residues: Transmembrane protein 191A (160 aa).

Residues 24–44 (FCFPLDFVSNLFWIFASKFII) traverse the membrane as a helical segment.

It belongs to the TMEM191 family.

It localises to the membrane. This Homo sapiens (Human) protein is Transmembrane protein 191A (TMEM191A).